The sequence spans 343 residues: Flagellar motor switch protein FliG (343 aa).

A Part of the EHPQR-motif motif is present at residues glutamate 137–glutamine 140. The short motif at methionine 245–phenylalanine 248 is the M-F-X-F motif; its intrinsic flexibility is probably coupled to flagellar rotation element.

The protein belongs to the FliG family.

It is found in the cell inner membrane. The protein resides in the bacterial flagellum basal body. One of the proteins that forms a switch complex that is proposed to be located at the base of the basal body. This complex interacts with chemotaxis proteins (such as CheY) in addition to contacting components of the motor that determine the direction of flagellar rotation. Required for flagellum synthesis and motility. In H.pylori four flagellar switch proteins are encoded, FliG, FliM, FliN and FliY. This is Flagellar motor switch protein FliG from Helicobacter pylori (strain ATCC 700392 / 26695) (Campylobacter pylori).